We begin with the raw amino-acid sequence, 514 residues long: 1-pyrroline-5-carboxylate dehydrogenase (514 aa).

Catalysis depends on residues glutamate 286 and cysteine 320.

The protein belongs to the aldehyde dehydrogenase family. RocA subfamily.

The catalysed reaction is L-glutamate 5-semialdehyde + NAD(+) + H2O = L-glutamate + NADH + 2 H(+). It participates in amino-acid degradation; L-proline degradation into L-glutamate; L-glutamate from L-proline: step 2/2. The sequence is that of 1-pyrroline-5-carboxylate dehydrogenase from Staphylococcus haemolyticus (strain JCSC1435).